The primary structure comprises 1309 residues: Tetratricopeptide repeat protein 41 (1309 aa).

TPR repeat units follow at residues 399 to 432, 651 to 684, 817 to 851, 859 to 892, 989 to 1024, and 1042 to 1079; these read PQLEMDFLNEDSNVLVFSLLIEVFMAAISLKPCI, WIQEKPNGLLYFQHQSLRNAVEHKMLGVTISVRE, LTFLLFLWGFLTLLGNRRANNLFSGAAPFLVSVQS, LKAQNAIGELYLDIGMMQKGLTYFQKAWSNLLRF, MSYFSSAVLMEFLFSRSQRKQAIEYYKQVIKIKEKA, and SDTLCKLAGQLLSGDFCHHATMEAVSYLYRSLDLRAAH.

It is found in the cytoplasm. This Rattus norvegicus (Rat) protein is Tetratricopeptide repeat protein 41.